The following is a 341-amino-acid chain: GTPase Obg (341 aa).

Positions 1–159 (MKFLDQAKVY…RTLWLRLKLI (159 aa)) constitute an Obg domain. In terms of domain architecture, OBG-type G spans 160–327 (ADAGLIGLPN…MLRAGAHMIE (168 aa)). GTP is bound by residues 166-173 (GLPNAGKS), 191-195 (FTTLY), 212-215 (DIPG), 279-282 (SQID), and 308-310 (SAV). 2 residues coordinate Mg(2+): Ser-173 and Thr-193.

Belongs to the TRAFAC class OBG-HflX-like GTPase superfamily. OBG GTPase family. Monomer. Mg(2+) is required as a cofactor.

The protein localises to the cytoplasm. An essential GTPase which binds GTP, GDP and possibly (p)ppGpp with moderate affinity, with high nucleotide exchange rates and a fairly low GTP hydrolysis rate. Plays a role in control of the cell cycle, stress response, ribosome biogenesis and in those bacteria that undergo differentiation, in morphogenesis control. The sequence is that of GTPase Obg from Bartonella quintana (strain Toulouse) (Rochalimaea quintana).